Consider the following 374-residue polypeptide: Speckle-type POZ protein B (374 aa).

The region spanning 31 to 161 (KFSYMWTINN…DDKLTLFCEV (131 aa)) is the MATH domain. Residues 71–191 (VNPKGLDEES…PECRLSDELG (121 aa)) are required for nuclear localization. The 125-residue stretch at 173-297 (QNTMNMVKVP…MCEEALCSNL (125 aa)) folds into the BTB domain. Residues 297-355 (LSVENAAEILILADLHSADQLKTQAVDFINYHASDVMETSGWKSMVVSHPHLVAEAYRS) form a homodimerization region.

The protein belongs to the Tdpoz family. As to quaternary structure, homodimer. Part of cullin-RING-based BCR (BTB-CUL3-RBX1) E3 ubiquitin-protein ligase complexes that contain CUL3 and SPOP, plus a target protein.

It is found in the nucleus. It localises to the nucleus speckle. It participates in protein modification; protein ubiquitination. Its function is as follows. Component of a cullin-RING-based BCR (BTB-CUL3-RBX1) E3 ubiquitin-protein ligase complex that mediates the ubiquitination of target proteins, leading most often to their proteasomal degradation. This chain is Speckle-type POZ protein B (spop-b), found in Xenopus laevis (African clawed frog).